A 545-amino-acid polypeptide reads, in one-letter code: Chaperonin GroEL (545 aa).

ATP-binding positions include 29–32 (TLGP), 86–90 (DGTTT), Gly413, 476–478 (NAA), and Asp492.

This sequence belongs to the chaperonin (HSP60) family. In terms of assembly, forms a cylinder of 14 subunits composed of two heptameric rings stacked back-to-back. Interacts with the co-chaperonin GroES.

The protein resides in the cytoplasm. It catalyses the reaction ATP + H2O + a folded polypeptide = ADP + phosphate + an unfolded polypeptide.. Its function is as follows. Together with its co-chaperonin GroES, plays an essential role in assisting protein folding. The GroEL-GroES system forms a nano-cage that allows encapsulation of the non-native substrate proteins and provides a physical environment optimized to promote and accelerate protein folding. In Oceanobacillus iheyensis (strain DSM 14371 / CIP 107618 / JCM 11309 / KCTC 3954 / HTE831), this protein is Chaperonin GroEL.